The chain runs to 230 residues: Antiholin-like protein LrgB (230 aa).

8 consecutive transmembrane segments (helical) span residues 5–25 (MTPYFGIVVSLIAYGIGTLLF), 30–50 (GFFLFTPLFVAMVLGIVFLKV), 61–81 (GGKMISFFLEPATIAFAIPLY), 92–112 (WQILSAIVVGSICSVVVVYIV), 126–146 (MLPQAATTAIALPISESIGGI), 149–169 (ITSFAVIFNAVIVYALGALFL), 177–197 (PIAKGLALGTAGHALGVAVGI), and 209–229 (IAVTVVGVVTVVVIPMFMPFI).

The protein belongs to the CidB/LrgB family. LrgB subfamily.

Its subcellular location is the cell membrane. Its function is as follows. Inhibits the expression or activity of extracellular murein hydrolases by interacting, possibly with LrgA, with the holin-like protein CidA. The LrgAB and CidA proteins may affect the proton motive force of the membrane. May be involved in programmed cell death (PCD), possibly triggering PCD in response to antibiotics and environmental stresses. The protein is Antiholin-like protein LrgB of Bacillus mycoides (strain KBAB4) (Bacillus weihenstephanensis).